The chain runs to 638 residues: Adhesion G-protein coupled receptor F2 (638 aa).

The first 25 residues, 1-25 (MISARWLYCLVLLLATESCRLFCQA), serve as a signal peptide directing secretion. Over 26–386 (ASKSKENVMP…ESPVLTYITY (361 aa)) the chain is Extracellular. 5 N-linked (GlcNAc...) asparagine glycosylation sites follow: asparagine 155, asparagine 219, asparagine 248, asparagine 293, and asparagine 311. The 145-residue stretch at 233–377 (PRNSLGKNFT…SILMSPNTVE (145 aa)) folds into the GAIN-B domain. 2 disulfide bridges follow: cysteine 329–cysteine 356 and cysteine 344–cysteine 358. The segment at 329–377 (CVGWHSLESRWDRRACKMIQENSRQAICRCQPNKFFTSFSILMSPNTVE) is GPS. A helical transmembrane segment spans residues 387–407 (IGLGISICSLIICLAIEALVW). Residues 408-422 (SQVTKTEISYLRHLC) lie on the Cytoplasmic side of the membrane. Residues 423–443 (IANIAVTLLMADVWFIVASFL) traverse the membrane as a helical segment. Residues 444–465 (SGPIVHHNGCVTATFFVHFFYL) are Extracellular-facing. The helical transmembrane segment at 466 to 486 (SVFFWMLAKALLILYGILIVF) threads the bilayer. Over 487-493 (HTLPKSC) the chain is Cytoplasmic. The chain crosses the membrane as a helical span at residues 494–514 (LVASLFTVGYGCPLVIAVITL). At 515–541 (AVTEPGKGYLRPEACWLNWDMTKALLA) the chain is on the extracellular side. A helical transmembrane segment spans residues 542–562 (FVVPALAIVVVNLITVTLVII). Over 563–586 (KTQRAAVGSSMFQEVRAIVRICKN) the chain is Cytoplasmic. The chain crosses the membrane as a helical span at residues 587–607 (IAILTPLLGLTWGFGIATVVA). Residues 608-610 (GHS) are Extracellular-facing. The helical transmembrane segment at 611 to 631 (LAFHIIFSLLNALQVSPDAMI) threads the bilayer. At 632-638 (ESEWRGC) the chain is on the cytoplasmic side.

Belongs to the G-protein coupled receptor 2 family. Adhesion G-protein coupled receptor (ADGR) subfamily.

Its subcellular location is the membrane. Orphan receptor. This chain is Adhesion G-protein coupled receptor F2 (Adgrf2), found in Rattus norvegicus (Rat).